We begin with the raw amino-acid sequence, 241 residues long: 2,3,4,5-tetrahydropyridine-2,6-dicarboxylate N-acetyltransferase (241 aa).

This sequence belongs to the transferase hexapeptide repeat family. DapH subfamily.

The catalysed reaction is (S)-2,3,4,5-tetrahydrodipicolinate + acetyl-CoA + H2O = L-2-acetamido-6-oxoheptanedioate + CoA. It participates in amino-acid biosynthesis; L-lysine biosynthesis via DAP pathway; LL-2,6-diaminopimelate from (S)-tetrahydrodipicolinate (acetylase route): step 1/3. Catalyzes the transfer of an acetyl group from acetyl-CoA to tetrahydrodipicolinate. This chain is 2,3,4,5-tetrahydropyridine-2,6-dicarboxylate N-acetyltransferase, found in Thermoanaerobacter pseudethanolicus (strain ATCC 33223 / 39E) (Clostridium thermohydrosulfuricum).